The chain runs to 311 residues: MKAKGRILLLTSCLFLLLLLLAKIHLRNHQEEELPLSDWFDPRRRLDVITTTDWLAPVIWEGTFDRKVLEKYYHKQNITMGLTVFAVSSFNGQYLDPFLQSASKFFMPGYRVIFYIMVDKSLKLPEMGHNPLQSFQVLVVSQERQWSDFDLMRMTVLSKHIREHIRFEVDFLFVMSVNMVFQNVFGVETLSTSVAQLHAWWYFRKTTHLPYERRPTSAAYIPFGLGDFYYAGAIIGGVPFQVLDFTHQYLKSVILDIENGVNSTYEKYLNKYFFLNKPTKLLSPEYSWDQTFNIPQQVHYVKVAHYPTDDL.

The Cytoplasmic segment spans residues 1–5; it reads MKAKG. The chain crosses the membrane as a helical; Signal-anchor for type II membrane protein span at residues 6-26; sequence RILLLTSCLFLLLLLLAKIHL. The Lumenal segment spans residues 27–311; that stretch reads RNHQEEELPL…KVAHYPTDDL (285 aa). Asparagine 77 is a glycosylation site (N-linked (GlcNAc...) asparagine). Residues 85 to 90, 176 to 178, and 198 to 201 each bind substrate; these read FAVSSF, SVN, and HAWW. Glutamate 266 (nucleophile) is an active-site residue.

The protein belongs to the glycosyltransferase 6 family. Mn(2+) is required as a cofactor.

The protein resides in the membrane. The sequence is that of Glycosyltransferase 6 domain-containing protein 1 (Glt6d1) from Rattus norvegicus (Rat).